The following is an 82-amino-acid chain: Endocuticle structural protein SgAbd-6 (82 aa).

Gln1 is modified (pyrrolidone carboxylic acid). Positions 18–82 (LGQYTFGFKT…ENGFQPQYTQ (65 aa)) constitute a Chitin-binding type R&amp;R domain.

In terms of biological role, component of the abdominal endocuticle. This Schistocerca gregaria (Desert locust) protein is Endocuticle structural protein SgAbd-6.